A 155-amino-acid polypeptide reads, in one-letter code: Myelin basic protein (155 aa).

Disordered regions lie at residues 1 to 70 (MASA…GRQT) and 109 to 155 (TDGQ…PARR). Ala-2 carries the N-acetylalanine modification. Basic and acidic residues-rich tracts occupy residues 37–49 (GSRKVPEKGKEPA) and 123–134 (KSKEAYRGRRDG).

This sequence belongs to the myelin basic protein family.

It localises to the myelin membrane. Functionally, this protein may function to maintain proper structure of myelin. This chain is Myelin basic protein (MBP), found in Heterodontus francisci (Horn shark).